Reading from the N-terminus, the 282-residue chain is ATP phosphoribosyltransferase (282 aa).

The protein belongs to the ATP phosphoribosyltransferase family. Long subfamily. The cofactor is Mg(2+).

It localises to the cytoplasm. It catalyses the reaction 1-(5-phospho-beta-D-ribosyl)-ATP + diphosphate = 5-phospho-alpha-D-ribose 1-diphosphate + ATP. It functions in the pathway amino-acid biosynthesis; L-histidine biosynthesis; L-histidine from 5-phospho-alpha-D-ribose 1-diphosphate: step 1/9. Feedback inhibited by histidine. In terms of biological role, catalyzes the condensation of ATP and 5-phosphoribose 1-diphosphate to form N'-(5'-phosphoribosyl)-ATP (PR-ATP). Has a crucial role in the pathway because the rate of histidine biosynthesis seems to be controlled primarily by regulation of HisG enzymatic activity. This is ATP phosphoribosyltransferase from Pyrobaculum calidifontis (strain DSM 21063 / JCM 11548 / VA1).